The primary structure comprises 353 residues: Bone morphogenetic protein 2 (353 aa).

The propeptide occupies 1-239 (GSLKRPEDLL…GHPLHKREKR (239 aa)). N-linked (GlcNAc...) asparagine glycans are attached at residues Asn-91, Asn-121, and Asn-157. The tract at residues 228–248 (GKGHPLHKREKRQAKHKQRKR) is disordered. Residues 231–248 (HPLHKREKRQAKHKQRKR) are compositionally biased toward basic residues. Cystine bridges form between Cys-253-Cys-318, Cys-282-Cys-350, and Cys-286-Cys-352. Asn-295 carries an N-linked (GlcNAc...) asparagine glycan.

It belongs to the TGF-beta family. As to quaternary structure, homodimer; disulfide-linked.

It is found in the secreted. Its function is as follows. Negatively regulates the structure and function of the limb apical ectodermal ridge. The polypeptide is Bone morphogenetic protein 2 (BMP2) (Gallus gallus (Chicken)).